The following is a 155-amino-acid chain: Keratin-associated protein 4-7 (155 aa).

20 tandem repeats follow at residues 5-9 (CCGSV), 24-28 (CCRPS), 29-33 (CCQTT), 34-38 (CCRTT), 44-48 (CCVSS), 49-53 (CCRPQ), 54-58 (CCQSV), 59-63 (CCQPT), 64-68 (CCRPT), 69-73 (CCETT), 74-78 (CCHPR), 79-83 (CCISS), 84-88 (CCRPS), 89-93 (CCMSS), 94-98 (CCKPQ), 99-103 (CCQSV), 104-108 (CCQPT), 109-113 (CCRPS), 114-118 (CCRPC), and 119-123 (CCLRP). The 20 X 5 AA repeats of C-C-[GIKRQVHEML]-[SPTRV]-[STVQRCP] stretch occupies residues 5–123 (CCGSVCSDQG…CCRPCCCLRP (119 aa)).

The protein belongs to the KRTAP type 4 family. As to quaternary structure, interacts with hair keratins. As to expression, expressed in the hair follicles.

Its function is as follows. In the hair cortex, hair keratin intermediate filaments are embedded in an interfilamentous matrix, consisting of hair keratin-associated proteins (KRTAP), which are essential for the formation of a rigid and resistant hair shaft through their extensive disulfide bond cross-linking with abundant cysteine residues of hair keratins. The matrix proteins include the high-sulfur and high-glycine-tyrosine keratins. The sequence is that of Keratin-associated protein 4-7 (KRTAP4-7) from Homo sapiens (Human).